The chain runs to 177 residues: Adenine phosphoribosyltransferase (177 aa).

It belongs to the purine/pyrimidine phosphoribosyltransferase family. Homodimer.

The protein localises to the cytoplasm. It carries out the reaction AMP + diphosphate = 5-phospho-alpha-D-ribose 1-diphosphate + adenine. The protein operates within purine metabolism; AMP biosynthesis via salvage pathway; AMP from adenine: step 1/1. In terms of biological role, catalyzes a salvage reaction resulting in the formation of AMP, that is energically less costly than de novo synthesis. The protein is Adenine phosphoribosyltransferase of Leptospira borgpetersenii serovar Hardjo-bovis (strain JB197).